Reading from the N-terminus, the 231-residue chain is Protein C activator (231 aa).

In terms of domain architecture, Peptidase S1 spans 1–222 (VIGGDECNIN…YTDWIQSIIS (222 aa)). Disulfide bonds link Cys-7–Cys-138, Cys-25–Cys-41, Cys-73–Cys-229, Cys-117–Cys-183, Cys-149–Cys-162, and Cys-173–Cys-198. Asn-21 carries an N-linked (GlcNAc...) asparagine glycan. His-40 functions as the Charge relay system in the catalytic mechanism. A glycan (N-linked (GlcNAc...) asparagine) is linked at Asn-78. Asp-85 (charge relay system) is an active-site residue. Residue Asn-129 is glycosylated (N-linked (GlcNAc...) asparagine). Catalysis depends on Ser-177, which acts as the Charge relay system.

The protein belongs to the peptidase S1 family. Snake venom subfamily. In terms of assembly, monomer. Expressed by the venom gland.

It localises to the secreted. Functionally, snake venom serine protease that selectively cleaves the heavy chain of protein C (PROC). This activation is thrombomodulin-independent. This Agkistrodon contortrix contortrix (Southern copperhead) protein is Protein C activator.